The sequence spans 102 residues: Small ribosomal subunit protein uS10 (102 aa).

A disordered region spans residues 34–58; it reads LSGPVPLPTKTLEIPARKSPDGEGT.

Belongs to the universal ribosomal protein uS10 family. In terms of assembly, part of the 30S ribosomal subunit.

Involved in the binding of tRNA to the ribosomes. This chain is Small ribosomal subunit protein uS10, found in Natronomonas pharaonis (strain ATCC 35678 / DSM 2160 / CIP 103997 / JCM 8858 / NBRC 14720 / NCIMB 2260 / Gabara) (Halobacterium pharaonis).